We begin with the raw amino-acid sequence, 205 residues long: uncharacterized protein (205 aa).

The 139-residue stretch at 51 to 189 (ANVDAVAILA…KKGFAIDVRL (139 aa)) folds into the Nudix hydrolase domain. The Nudix box motif lies at 90–111 (GLVDSKESCEDAAIRELREETG).

It belongs to the Nudix hydrolase family.

The protein localises to the cytoplasm. Its subcellular location is the nucleus. This is an uncharacterized protein from Schizosaccharomyces pombe (strain 972 / ATCC 24843) (Fission yeast).